The primary structure comprises 134 residues: ATP synthase epsilon chain, chloroplastic (134 aa).

It belongs to the ATPase epsilon chain family. In terms of assembly, F-type ATPases have 2 components, CF(1) - the catalytic core - and CF(0) - the membrane proton channel. CF(1) has five subunits: alpha(3), beta(3), gamma(1), delta(1), epsilon(1). CF(0) has three main subunits: a, b and c.

The protein localises to the plastid. It is found in the chloroplast thylakoid membrane. Produces ATP from ADP in the presence of a proton gradient across the membrane. This chain is ATP synthase epsilon chain, chloroplastic, found in Phalaenopsis aphrodite subsp. formosana (Moth orchid).